The sequence spans 457 residues: Cell division protein FtsA (457 aa).

This sequence belongs to the FtsA/MreB family. In terms of assembly, self-interacts. Interacts with FtsZ.

It is found in the cell membrane. In terms of biological role, cell division protein that is involved in the assembly of the Z ring. May serve as a membrane anchor for the Z ring. Increased expression restores growth to a PBP2b (penA) deletion strain as well as mreCD and rodA deletions, but not gpsB or rodZ deletions. Does not restore wild-type cell morphology to the penA deletion. In Streptococcus pneumoniae serotype 2 (strain D39 / NCTC 7466), this protein is Cell division protein FtsA.